The sequence spans 46 residues: uncharacterized protein (46 aa).

To equivalent protein in phage 82.

This is an uncharacterized protein from Escherichia coli (strain K12).